We begin with the raw amino-acid sequence, 37 residues long: Large ribosomal subunit protein bL36c (37 aa).

Belongs to the bacterial ribosomal protein bL36 family.

It localises to the plastid. This chain is Large ribosomal subunit protein bL36c, found in Cuscuta reflexa (Southern Asian dodder).